Consider the following 399-residue polypeptide: Ribonuclease T2-like 1-A (399 aa).

Residues 1–17 form the signal peptide; the sequence is MLSILSIAALLIATVQA. 5 disulfide bridges follow: Cys24–Cys43, Cys32–Cys79, Cys42–Cys150, Cys87–Cys142, and Cys214–Cys249. Catalysis depends on residues His72, Glu135, and His139. The tract at residues 259–279 is disordered; it reads KGNSGANTLTTKTTGTTTSGS. Low complexity predominate over residues 262-279; that stretch reads SGANTLTTKTTGTTTSGS. A glycan (N-linked (GlcNAc...) asparagine) is linked at Asn291.

The protein belongs to the RNase T2 family.

The protein localises to the vacuole lumen. Its subcellular location is the cytoplasm. It carries out the reaction a ribonucleotidyl-ribonucleotide-RNA + H2O = a 3'-end 3'-phospho-ribonucleotide-RNA + a 5'-end dephospho-ribonucleoside-RNA + H(+). In terms of biological role, rnase which modulates cell survival under stress conditions. Released from the vacuole to the cytoplasm during stress to promote tRNA and rRNA cleavage and to activate separately a downstream pathway that promotes cell death. Involved in cell size, vacuolar morphology and growth at high temperatures and high salt concentration. This is Ribonuclease T2-like 1-A (RNY1-A) from Candida albicans (strain SC5314 / ATCC MYA-2876) (Yeast).